Consider the following 197-residue polypeptide: Imidazoleglycerol-phosphate dehydratase (197 aa).

The protein belongs to the imidazoleglycerol-phosphate dehydratase family.

The protein resides in the cytoplasm. The catalysed reaction is D-erythro-1-(imidazol-4-yl)glycerol 3-phosphate = 3-(imidazol-4-yl)-2-oxopropyl phosphate + H2O. The protein operates within amino-acid biosynthesis; L-histidine biosynthesis; L-histidine from 5-phospho-alpha-D-ribose 1-diphosphate: step 6/9. In Nitrosococcus oceani (strain ATCC 19707 / BCRC 17464 / JCM 30415 / NCIMB 11848 / C-107), this protein is Imidazoleglycerol-phosphate dehydratase.